The chain runs to 646 residues: Probable lysosomal cobalamin transporter (646 aa).

5 consecutive transmembrane segments (helical) span residues 11 to 31 (LIWVAYGVAVALVLLVSVITT), 42 to 62 (IAVSIVSIISLTALLATVFLL), 102 to 122 (TLYTLDALLCLIVIPFTYFWF), 149 to 169 (LGFVFLVVILFLIGFFVPAAG), and 193 to 213 (ALTFGVGLLITLGTLLYILYT). Asn297 carries an N-linked (GlcNAc...) asparagine glycan. Helical transmembrane passes span 317–337 (LLGGIFLLLLAILIWVSMLIT) and 380–400 (ILMALLVLLFFSSSITGLATI). Disordered stretches follow at residues 459–588 (QPAA…PPRR) and 603–623 (VGRARGVKLNGGAATENDKKE). Low complexity-rich tracts occupy residues 460–490 (PAAATRASSPTAASTATWCAPAPRPSASPAA) and 517–543 (PSTSGPSSSSSPSSSSSSSPASSRTPR). An N-linked (GlcNAc...) asparagine glycan is attached at Asn545. Residues 565–582 (APAAALARPGAISPAAPR) are compositionally biased toward low complexity. N-linked (GlcNAc...) asparagine glycosylation occurs at Asn626.

It belongs to the LIMR family. LMBRD1 subfamily.

The protein localises to the lysosome membrane. Its function is as follows. Probable lysosomal cobalamin transporter. Required to export cobalamin from lysosomes allowing its conversion to cofactors. This chain is Probable lysosomal cobalamin transporter, found in Chaetomium globosum (strain ATCC 6205 / CBS 148.51 / DSM 1962 / NBRC 6347 / NRRL 1970) (Soil fungus).